Consider the following 544-residue polypeptide: CTP synthase (544 aa).

The segment at 1–266 (MTRFVFITGG…DREVLRHFNL (266 aa)) is amidoligase domain. A CTP-binding site is contributed by S13. A UTP-binding site is contributed by S13. 14–19 (SLGKGI) contributes to the ATP binding site. Y54 contacts L-glutamine. D71 is an ATP binding site. Mg(2+) contacts are provided by D71 and E140. CTP-binding positions include 147–149 (DIE), 187–192 (KTKPTQ), and K223. Residues 187 to 192 (KTKPTQ) and K223 contribute to the UTP site. The Glutamine amidotransferase type-1 domain occupies 292 to 543 (KIAIVGKYIT…VAAAVRQARL (252 aa)). G354 contributes to the L-glutamine binding site. The Nucleophile; for glutamine hydrolysis role is filled by C381. L-glutamine-binding positions include 382 to 385 (FGMQ), E405, and R471. Residues H516 and E518 contribute to the active site.

It belongs to the CTP synthase family. Homotetramer.

The catalysed reaction is UTP + L-glutamine + ATP + H2O = CTP + L-glutamate + ADP + phosphate + 2 H(+). The enzyme catalyses L-glutamine + H2O = L-glutamate + NH4(+). It carries out the reaction UTP + NH4(+) + ATP = CTP + ADP + phosphate + 2 H(+). Its pathway is pyrimidine metabolism; CTP biosynthesis via de novo pathway; CTP from UDP: step 2/2. Allosterically activated by GTP, when glutamine is the substrate; GTP has no effect on the reaction when ammonia is the substrate. The allosteric effector GTP functions by stabilizing the protein conformation that binds the tetrahedral intermediate(s) formed during glutamine hydrolysis. Inhibited by the product CTP, via allosteric rather than competitive inhibition. Catalyzes the ATP-dependent amination of UTP to CTP with either L-glutamine or ammonia as the source of nitrogen. Regulates intracellular CTP levels through interactions with the four ribonucleotide triphosphates. This chain is CTP synthase, found in Granulibacter bethesdensis (strain ATCC BAA-1260 / CGDNIH1).